A 252-amino-acid polypeptide reads, in one-letter code: Pimeloyl-[acyl-carrier protein] methyl ester esterase (252 aa).

Residues 15-239 enclose the AB hydrolase-1 domain; it reads LVMLHGWAMH…FPHCGHAPFL (225 aa). Substrate contacts are provided by residues Trp-21, 81–82, and 143–147; these read SL and FLTLQ. Ser-81 serves as the catalytic Nucleophile. Residues Asp-207 and His-235 contribute to the active site. His-235 provides a ligand contact to substrate.

Belongs to the AB hydrolase superfamily. Carboxylesterase BioH family. In terms of assembly, monomer.

It localises to the cytoplasm. It catalyses the reaction 6-carboxyhexanoyl-[ACP] methyl ester + H2O = 6-carboxyhexanoyl-[ACP] + methanol + H(+). The protein operates within cofactor biosynthesis; biotin biosynthesis. In terms of biological role, the physiological role of BioH is to remove the methyl group introduced by BioC when the pimeloyl moiety is complete. It allows to synthesize pimeloyl-ACP via the fatty acid synthetic pathway through the hydrolysis of the ester bonds of pimeloyl-ACP esters. The sequence is that of Pimeloyl-[acyl-carrier protein] methyl ester esterase from Nitrosomonas europaea (strain ATCC 19718 / CIP 103999 / KCTC 2705 / NBRC 14298).